Reading from the N-terminus, the 346-residue chain is 2,5-dichlorohydroquinone reductive dechlorinase (346 aa).

In terms of domain architecture, GST N-terminal spans 43 to 154; the sequence is PRFELFHFVF…YLCDALSGGT (112 aa). Residues 189 to 335 enclose the GST C-terminal domain; sequence DRRPESMQAV…AIIQWPGHPP (147 aa).

It belongs to the GST superfamily.

It carries out the reaction 2,5-dichlorohydroquinone + 2 glutathione = chlorohydroquinone + glutathione disulfide + chloride + H(+). It catalyses the reaction chlorohydroquinone + 2 glutathione = hydroquinone + glutathione disulfide + chloride + H(+). It participates in xenobiotic degradation; gamma-hexachlorocyclohexane degradation. Functionally, catalyzes the degradation of 2,5-dichlorohydroquinone (2,5-DCHQ) into hydroquinone (HQ) via chlorohydroquinone (CHQ). Is involved in the degradation pathway that allows S.japonicum UT26 to grow on gamma-hexachlorocyclohexane (gamma-HCH or lindane) as the sole source of carbon and energy. However, the conversion of CHQ to HQ by LinD seems not to be essential for this degradation pathway, because the conversion rate of CHQ to HQ is much lower than that of 2,5-DCHQ to CHQ. CHQ is more efficiently degraded by LinE in strain UT26. This chain is 2,5-dichlorohydroquinone reductive dechlorinase, found in Sphingobium indicum (strain DSM 16413 / CCM 7287 / MTCC 6362 / UT26 / NBRC 101211 / UT26S) (Sphingobium japonicum).